The following is a 126-amino-acid chain: Fluoride-specific ion channel FluC 1 (126 aa).

Transmembrane regions (helical) follow at residues 5-25, 39-59, 69-89, and 100-120; these read FILA…LVGI, TLFI…LFAI, IFLI…SLDS, and AAGA…IAGI. 2 residues coordinate Na(+): Gly77 and Thr80.

Belongs to the fluoride channel Fluc/FEX (TC 1.A.43) family.

It is found in the cell inner membrane. The catalysed reaction is fluoride(in) = fluoride(out). Its activity is regulated as follows. Na(+) is not transported, but it plays an essential structural role and its presence is essential for fluoride channel function. Functionally, fluoride-specific ion channel. Important for reducing fluoride concentration in the cell, thus reducing its toxicity. The polypeptide is Fluoride-specific ion channel FluC 1 (Nitrobacter hamburgensis (strain DSM 10229 / NCIMB 13809 / X14)).